A 267-amino-acid polypeptide reads, in one-letter code: Phosphate import ATP-binding protein PstB 2 (267 aa).

An ABC transporter domain is found at 21 to 262 (LSTKDVHVYY…AKLQSTNDYV (242 aa)). 53–60 (GPSGSGKS) is an ATP binding site.

This sequence belongs to the ABC transporter superfamily. Phosphate importer (TC 3.A.1.7) family. In terms of assembly, the complex is composed of two ATP-binding proteins (PstB), two transmembrane proteins (PstC and PstA) and a solute-binding protein (PstS).

It localises to the cell membrane. The catalysed reaction is phosphate(out) + ATP + H2O = ADP + 2 phosphate(in) + H(+). Its function is as follows. Part of the ABC transporter complex PstSACB involved in phosphate import. Responsible for energy coupling to the transport system. This is Phosphate import ATP-binding protein PstB 2 from Streptococcus pneumoniae (strain ATCC BAA-255 / R6).